A 283-amino-acid polypeptide reads, in one-letter code: MQTDSLSPSPNPVSPVPLNNPTSAPRYGTVIPNRIFVGGIDFKTNESDLRKFFSQYGSVKEVKIVNDRAGVSKGYGFVTFETQEDAQKILQEAEKLNYKDKKLNIGPAIRKQQVGIPRSSIMPAAGTMYLTTSTGYPYTYHNGVAYFHTPEVTSVPPPWPSRSVCSSPVMVAQPIYQQPAYHYQATTQYLPGQWQWSVPQPSASSAPFLYLQPSEVIYQPVEIAQDGGCVPPPLSLMETSVPEPYSDHGVQATYHQVYAPSAITMPAPVMQPEPIKTVWSIHY.

The disordered stretch occupies residues 1–25 (MQTDSLSPSPNPVSPVPLNNPTSAP). The RRM domain maps to 33–110 (NRIFVGGIDF…KKLNIGPAIR (78 aa)). Residues 160 to 184 (PSRSVCSSPVMVAQPIYQQPAYHYQ) form the DAZ domain.

The protein belongs to the RRM DAZ family. As to quaternary structure, interacts with DAZ1 and DAZL. In terms of tissue distribution, testis specific. Not expressed in early embryos, primordial germ cells and spermatogonial cells. First expressed in the cytoplasm of spermatocytes and then persists through meiosis.

Its subcellular location is the cytoplasm. Its function is as follows. Probable RNA-binding protein, which may be required during spermatogenesis. May act by binding to the 3'-UTR of mRNAs and regulating their translation. The protein is Protein boule-like (BOLL) of Homo sapiens (Human).